We begin with the raw amino-acid sequence, 1726 residues long: Gag-Pro-Pol polyprotein (1726 aa).

The N-myristoyl glycine; by host moiety is linked to residue G2. Residues 103–148 are disordered; that stretch reads LKQEEDPLHTPDSVPSYDPPPPPPPSLKMHPSDNDDSLSSTDEAEL. A compositionally biased stretch (pro residues) spans 119-128; it reads YDPPPPPPPS. The PTAP/PSAP motif motif lies at 202-205; the sequence is PSAP. The PPXY motif signature appears at 208–211; the sequence is PPAY. Residues 287–290 carry the PTAP/PSAP motif motif; the sequence is PTAP. The segment at 507 to 524 adopts a CCHC-type zinc-finger fold; it reads SGCFVCGQPGHRAAVCPQ. Residues 550 to 570 are disordered; sequence RSKTDVQGNPLPPVSGNLGEG. A Peptidase A2 domain is found at 734–810; it reads FRGVLDTGAD…LPVNLWGRDI (77 aa). D739 acts as the Protease; shared with dimeric partner in catalysis. The 46-residue stretch at 821–866 folds into the G-patch domain; that stretch reads PSPTVTDLMLDQGLLPNQGLGKQHQGIILPLDLKPNQDRKGLGCFP. One can recognise a Reverse transcriptase domain in the interval 911–1099; sequence LRLGHIEPST…FPYNYLGFSL (189 aa). Mg(2+)-binding residues include D976, D1051, D1052, D1322, E1351, D1371, and D1436. An RNase H type-1 domain is found at 1313–1444; it reads IPEATLIFTD…ADVLTKQVFF (132 aa). Residues 1446 to 1487 form an Integrase-type zinc finger; the sequence is SAIDAARKSHDLHHQNSHSLRLQFKISREAARQIVKSCSTCP. Zn(2+) contacts are provided by H1455, H1459, C1483, and C1486. The Integrase catalytic domain maps to 1500–1659; sequence RGLRPNHLWQ…SAAQRFWGER (160 aa). Positions 1511, 1568, and 1604 each coordinate Mg(2+). The integrase-type DNA-binding region spans 1665 to 1714; sequence PLVRWKDPLTNLWYGPDPVLIWGRGHVCVFPQDAEAPRWIPERLVRAAEE.

This sequence belongs to the retroviral Pol polyprotein family. In terms of assembly, homodimer. As to quaternary structure, interacts with the G-patch peptide. Interacts with the reverse transcriptase/ribonuclease H. In terms of assembly, homotrimer. It depends on Mg(2+) as a cofactor. In terms of processing, released by autocatalytic processing. The protease can undergo further autoprocessing to yield 2 shorter but enzymatically active forms of 12 kDa and 13 kDa. Post-translationally, myristoylated. Myristoylation of the matrix (MA) domain mediates the transport and binding of Gag polyproteins to the host plasma membrane and is required for the assembly of viral particles. Specific enzymatic cleavages in vivo yield mature proteins.

Its subcellular location is the virion. It catalyses the reaction DNA(n) + a 2'-deoxyribonucleoside 5'-triphosphate = DNA(n+1) + diphosphate. It carries out the reaction Endonucleolytic cleavage to 5'-phosphomonoester.. The enzyme catalyses dUTP + H2O = dUMP + diphosphate + H(+). Functionally, matrix protein. In terms of biological role, nucleocapsid protein p14: Nucleocapsid protein. Capsid protein. Its function is as follows. The aspartyl protease mediates proteolytic cleavages of Gag and Gag-Pol polyproteins during or shortly after the release of the virion from the plasma membrane. Cleavages take place as an ordered, step-wise cascade to yield mature proteins. This process is called maturation. Displays maximal activity during the budding process just prior to particle release from the cell. Functionally, enhances the activity of the reverse transcriptase. May be part of the mature RT. In terms of biological role, RT is a multifunctional enzyme that converts the viral dimeric RNA genome into dsDNA in the cytoplasm, shortly after virus entry into the cell. This enzyme displays a DNA polymerase activity that can copy either DNA or RNA templates, and a ribonuclease H (RNase H) activity that cleaves the RNA strand of RNA-DNA heteroduplexes in a partially processive 3' to 5' endonucleasic mode. Conversion of viral genomic RNA into dsDNA requires many steps. A tRNA binds to the primer-binding site (PBS) situated at the 5' end of the viral RNA. RT uses the 3' end of the tRNA primer to perfom a short round of RNA-dependent minus-strand DNA synthesis. The reading proceeds through the U5 region and ends after the repeated (R) region which is present at both ends of viral RNA. The portion of the RNA-DNA heteroduplex is digested by the RNase H, resulting in a ssDNA product attached to the tRNA primer. This ssDNA/tRNA hybridizes with the identical R region situated at the 3' end of viral RNA. This template exchange, known as minus-strand DNA strong stop transfer, can be either intra- or intermolecular. RT uses the 3' end of this newly synthesized short ssDNA to perfom the RNA-dependent minus-strand DNA synthesis of the whole template. RNase H digests the RNA template except for a polypurine tract (PPT) situated at the 5' end of the genome. It is not clear if both polymerase and RNase H activities are simultaneous. RNase H probably can proceed both in a polymerase-dependent (RNA cut into small fragments by the same RT performing DNA synthesis) and a polymerase-independent mode (cleavage of remaining RNA fragments by free RTs). Secondly, RT performs DNA-directed plus-strand DNA synthesis using the PPT that has not been removed by RNase H as primers. PPT and tRNA primers are then removed by RNase H. The 3' and 5' ssDNA PBS regions hybridize to form a circular dsDNA intermediate. Strand displacement synthesis by RT to the PBS and PPT ends produces a blunt ended, linear dsDNA copy of the viral genome that includes long terminal repeats (LTRs) at both ends. Catalyzes viral DNA integration into the host chromosome, by performing a series of DNA cutting and joining reactions. The polypeptide is Gag-Pro-Pol polyprotein (pol) (Ovis aries (Sheep)).